The chain runs to 605 residues: Mini-chromosome maintenance complex-binding protein (605 aa).

Residues S147 and S150 each carry the phosphoserine modification.

The protein belongs to the MCMBP family. In terms of assembly, interacts with the MCM complex.

It is found in the nucleus. In terms of biological role, associated component of the MCM complex that acts as a regulator of DNA replication. Binds to the MCM complex during late S phase and may act by promoting the disassembly of the MCM complex from chromatin. The polypeptide is Mini-chromosome maintenance complex-binding protein (Drosophila melanogaster (Fruit fly)).